We begin with the raw amino-acid sequence, 363 residues long: Histidine biosynthesis bifunctional protein HisB (363 aa).

The histidinol-phosphatase stretch occupies residues 1–174 (MTQPTLFIDR…AVTNIGDRQP (174 aa)). Residue D9 is the Nucleophile of the active site. The Mg(2+) site is built by D9 and D11. Catalysis depends on D11, which acts as the Proton donor. 4 residues coordinate Zn(2+): C92, H94, C100, and C102. D129 is a Mg(2+) binding site. The interval 175–363 (RYAEVVRKTK…NELPSSKGVL (189 aa)) is imidazoleglycerol-phosphate dehydratase.

The protein in the N-terminal section; belongs to the histidinol-phosphatase family. It in the C-terminal section; belongs to the imidazoleglycerol-phosphate dehydratase family. Mg(2+) serves as cofactor. Zn(2+) is required as a cofactor.

The protein resides in the cytoplasm. It catalyses the reaction D-erythro-1-(imidazol-4-yl)glycerol 3-phosphate = 3-(imidazol-4-yl)-2-oxopropyl phosphate + H2O. The catalysed reaction is L-histidinol phosphate + H2O = L-histidinol + phosphate. Its pathway is amino-acid biosynthesis; L-histidine biosynthesis; L-histidine from 5-phospho-alpha-D-ribose 1-diphosphate: step 6/9. It participates in amino-acid biosynthesis; L-histidine biosynthesis; L-histidine from 5-phospho-alpha-D-ribose 1-diphosphate: step 8/9. The chain is Histidine biosynthesis bifunctional protein HisB from Actinobacillus pleuropneumoniae serotype 5b (strain L20).